The primary structure comprises 447 residues: DNA primase DnaG (447 aa).

Residues 200–274 (DSIIVVEGRA…DIDYVARAPE (75 aa)) form the Toprim domain. The Mg(2+) site is built by Glu206, Asp248, and Asp250. Residues 316 to 339 (ERRRGGARKQEYTKKGSLNPQPQV) are disordered.

This sequence belongs to the archaeal DnaG primase family. As to quaternary structure, forms a ternary complex with MCM helicase and DNA. Component of the archaeal exosome complex. Requires Mg(2+) as cofactor.

It catalyses the reaction ssDNA + n NTP = ssDNA/pppN(pN)n-1 hybrid + (n-1) diphosphate.. Functionally, RNA polymerase that catalyzes the synthesis of short RNA molecules used as primers for DNA polymerase during DNA replication. Also part of the exosome, which is a complex involved in RNA degradation. Acts as a poly(A)-binding protein that enhances the interaction between heteromeric, adenine-rich transcripts and the exosome. In Pyrococcus furiosus (strain ATCC 43587 / DSM 3638 / JCM 8422 / Vc1), this protein is DNA primase DnaG.